The chain runs to 199 residues: Peptidyl-tRNA hydrolase (199 aa).

Y15 contacts tRNA. The active-site Proton acceptor is the H20. Residues Y66, N68, and N114 each coordinate tRNA.

Belongs to the PTH family. As to quaternary structure, monomer.

It localises to the cytoplasm. It carries out the reaction an N-acyl-L-alpha-aminoacyl-tRNA + H2O = an N-acyl-L-amino acid + a tRNA + H(+). Functionally, hydrolyzes ribosome-free peptidyl-tRNAs (with 1 or more amino acids incorporated), which drop off the ribosome during protein synthesis, or as a result of ribosome stalling. In terms of biological role, catalyzes the release of premature peptidyl moieties from peptidyl-tRNA molecules trapped in stalled 50S ribosomal subunits, and thus maintains levels of free tRNAs and 50S ribosomes. The chain is Peptidyl-tRNA hydrolase from Burkholderia cenocepacia (strain ATCC BAA-245 / DSM 16553 / LMG 16656 / NCTC 13227 / J2315 / CF5610) (Burkholderia cepacia (strain J2315)).